The chain runs to 418 residues: eIF5-mimic protein 2-B (418 aa).

A compositionally biased stretch (polar residues) spans 1-15 (MSYQKQQKPTLTGQR). The segment at 1–29 (MSYQKQQKPTLTGQRFKTRKRDEKERFDP) is disordered. The W2 domain maps to 247–414 (NQQSLGARKE…KNAEEESESE (168 aa)).

Belongs to the BZW family.

Functionally, translation initiation regulator which may repress repeat-associated non-AUG (RAN) initiated translation probably by acting as a competitive inhibitor of eukaryotic translation initiation factor 5 (EIF5) function. Enhances histone H4 gene transcription but does not seem to bind DNA directly. The protein is eIF5-mimic protein 2-B (bzw1b) of Danio rerio (Zebrafish).